Consider the following 276-residue polypeptide: Shikimate dehydrogenase (NADP(+)) (276 aa).

Residues 15 to 17 (SKS) and threonine 62 each bind shikimate. The active-site Proton acceptor is lysine 66. Residues asparagine 87 and aspartate 103 each contribute to the shikimate site. Residues 127–131 (GAGGA), 151–156 (NRTLSK), and methionine 215 each bind NADP(+). Tyrosine 217 serves as a coordination point for shikimate. Glycine 239 provides a ligand contact to NADP(+).

It belongs to the shikimate dehydrogenase family. In terms of assembly, homodimer.

The catalysed reaction is shikimate + NADP(+) = 3-dehydroshikimate + NADPH + H(+). It functions in the pathway metabolic intermediate biosynthesis; chorismate biosynthesis; chorismate from D-erythrose 4-phosphate and phosphoenolpyruvate: step 4/7. Functionally, involved in the biosynthesis of the chorismate, which leads to the biosynthesis of aromatic amino acids. Catalyzes the reversible NADPH linked reduction of 3-dehydroshikimate (DHSA) to yield shikimate (SA). This is Shikimate dehydrogenase (NADP(+)) from Cellvibrio japonicus (strain Ueda107) (Pseudomonas fluorescens subsp. cellulosa).